Here is a 233-residue protein sequence, read N- to C-terminus: Large ribosomal subunit protein uL1 (233 aa).

The protein belongs to the universal ribosomal protein uL1 family. As to quaternary structure, part of the 50S ribosomal subunit.

Binds directly to 23S rRNA. The L1 stalk is quite mobile in the ribosome, and is involved in E site tRNA release. Functionally, protein L1 is also a translational repressor protein, it controls the translation of the L11 operon by binding to its mRNA. The chain is Large ribosomal subunit protein uL1 from Geotalea uraniireducens (strain Rf4) (Geobacter uraniireducens).